Here is a 1091-residue protein sequence, read N- to C-terminus: Sodium/potassium exporting P-type ATPase 1 (1091 aa).

Over methionine 1–lysine 63 the chain is Cytoplasmic. Residues alanine 64–isoleucine 84 form a helical membrane-spanning segment. Residues serine 85–aspartate 90 are Extracellular-facing. Residues tryptophan 91–glutamine 111 traverse the membrane as a helical segment. Over glutamate 112–lysine 282 the chain is Cytoplasmic. Residues leucine 283–alanine 303 traverse the membrane as a helical segment. At serine 304 to arginine 312 the chain is on the extracellular side. The chain crosses the membrane as a helical span at residues valine 313 to leucine 333. The Cytoplasmic segment spans residues threonine 334–phenylalanine 815. The active-site 4-aspartylphosphate intermediate is aspartate 369. Aspartate 369 and threonine 371 together coordinate Mg(2+). Positions 371 and 483 each coordinate ATP. Residues alanine 499 to glycine 525 are disordered. Polar residues predominate over residues glutamate 503 to glutamine 519. Lysine 561, arginine 606, threonine 673, glycine 674, aspartate 675, arginine 732, and lysine 738 together coordinate ATP. Aspartate 757 lines the Mg(2+) pocket. Asparagine 760 provides a ligand contact to ATP. The helical transmembrane segment at valine 816–phenylalanine 836 threads the bilayer. Topologically, residues arginine 837–serine 848 are extracellular. A helical membrane pass occupies residues proline 849–leucine 869. The Cytoplasmic portion of the chain corresponds to glutamate 870 to glutamate 885. The chain crosses the membrane as a helical span at residues valine 886–glycine 906. At serine 907–arginine 943 the chain is on the extracellular side. The chain crosses the membrane as a helical span at residues serine 944 to methionine 964. The Cytoplasmic segment spans residues arginine 965–phenylalanine 991. A helical transmembrane segment spans residues leucine 992 to isoleucine 1012. The Extracellular portion of the chain corresponds to asparagine 1013–proline 1021. A helical membrane pass occupies residues isoleucine 1022–leucine 1042. Residues tyrosine 1043–glutamine 1091 are Cytoplasmic-facing.

This sequence belongs to the cation transport ATPase (P-type) (TC 3.A.3) family. Type IID subfamily. The cofactor is Mg(2+). The active site is phosphorylated in presence of sodium or potassium and in conditions of higher pH. Not phosphorylated in presence of calcium ions.

The protein resides in the cell membrane. The enzyme catalyses Na(+)(in) + ATP + H2O = Na(+)(out) + ADP + phosphate + H(+). It catalyses the reaction K(+)(in) + ATP + H2O = K(+)(out) + ADP + phosphate + H(+). Functionally, catalyzes the hydrolysis of ATP coupled with the export of sodium and potassium from the cell. May export potassium less efficiently. May transport other cations such as lithium. Sodium/potassium efflux ATPases are involved in salt tolerance and maintaining the membrane potential across the plasma membrane in high salinity (Na+) or alkaline (K+) environments. Is negatively modulated by SIS2/HAL3. In Saccharomyces cerevisiae (strain ATCC 204508 / S288c) (Baker's yeast), this protein is Sodium/potassium exporting P-type ATPase 1.